Reading from the N-terminus, the 276-residue chain is Secretagogin (276 aa).

EF-hand domains follow at residues 12-47 (LDAACFWQIWQRFDKEEKGYIRETELDAFFDHLLAK), 58-93 (NVQKVKEQLMTSHNVSKEGRILMKELASMFLSEDEN), 105-140 (DNSVEFMQIWRKYDADSSGFISAAELCNFLRDLFLH), 149-184 (ELEEYTSTMMKIFDKNKDGRLDLNDLARILALQENF), 197-232 (ERKRDFEKIFAHYDVSKTGALEGPEVDGFVKDMMEL), and 240-276 (VDLDKFREILLRHCDVNKDGKIQKSELALCLGLKINP). Ca(2+) is bound by residues aspartate 25, tyrosine 31, glutamate 36, serine 73, glutamate 75, arginine 77, glutamate 82, aspartate 118, aspartate 120, serine 122, glutamate 129, aspartate 162, asparagine 164, aspartate 166, arginine 168, aspartate 173, aspartate 210, serine 212, threonine 214, glutamate 221, aspartate 254, asparagine 256, aspartate 258, lysine 260, and glutamate 265.

The protein resides in the cytoplasm. It is found in the secreted. Its subcellular location is the cytoplasmic vesicle. The protein localises to the secretory vesicle membrane. The sequence is that of Secretagogin (Scgn) from Mus musculus (Mouse).